The primary structure comprises 1323 residues: Nck-associated protein 5-like (1323 aa).

Disordered regions lie at residues 1–22 (MDQP…DSME), 113–142 (QIPL…TSLP), 156–175 (QQLR…ALDA), 204–238 (PATP…PWAP), 260–314 (PGEE…DTLL), and 341–714 (GATG…EQPE). Residues 1 to 135 (MDQPAGGTGK…PTSPAPNVSE (135 aa)) are mediates interaction with CDK5RAP2 and is required for homodimerization and microtubule bundle formation. A coiled-coil region spans residues 22–109 (ELSTCQELLH…LQQKLQLTAN (88 aa)). Composition is skewed to pro residues over residues 162–172 (GPGPPATPPPA) and 226–236 (CGPPQPEPSPW). Positions 271–298 (ASSRAPPSAQGPSSGPHCAPGSSSSSSS) are enriched in low complexity. The span at 353-364 (PGKPNSPDPGPP) shows a compositional bias: pro residues. Serine 436, serine 447, serine 466, and serine 473 each carry phosphoserine; by CDK1. Positions 480-483 (SRIP) match the (S/T)X(I/L)P motif 1 motif. A phosphoserine mark is found at serine 489, serine 492, and serine 494. Residues 531 to 542 (LRPSQSTVSTAL) show a composition bias toward polar residues. At serine 573 the chain carries Phosphoserine; by CDK1. The segment covering 647–660 (RPGDPSHTPLRDRL) has biased composition (basic and acidic residues). Threonine 654 carries the post-translational modification Phosphothreonine. A mediates interaction with beta-tubulin and is required for microtubule bundle formation region spans residues 743 to 1136 (RVYSSHSMGA…SGTPSKNLPK (394 aa)). Serine 760 carries the phosphoserine; by CDK1 modification. Disordered regions lie at residues 778 to 875 (ALCP…HSAI), 892 to 948 (GQER…EVKT), 979 to 1003 (AYLS…GQAQ), and 1027 to 1323 (KELP…GSQG). A compositionally biased stretch (low complexity) spans 799–817 (KPKSPHSSPTKLPSKSPTK). A (S/T)X(I/L)P motif 2 motif is present at residues 808–811 (TKLP). Positions 918-921 (SKLP) match the (S/T)X(I/L)P motif 3; required for interaction with MAPRE1 motif. A compositionally biased stretch (basic and acidic residues) spans 925-934 (RRTEATKNKD). Residues 942 to 985 (LRKEVKTEARKLEAESLNISKLMAKAEDLRRALEEEKAYLSRAR) are a coiled coil. The segment covering 1027–1041 (KELPPKSWREPKPEY) has biased composition (basic and acidic residues). Composition is skewed to polar residues over residues 1097–1112 (VSTT…TRTL) and 1124–1136 (HSSS…NLPK). Residues 1143 to 1153 (DPPPGAPPARP) are compositionally biased toward pro residues. At serine 1184 the chain carries Phosphoserine. 2 stretches are compositionally biased toward polar residues: residues 1225–1237 (TFPN…SSSD) and 1264–1273 (VDPSRTSTPQ). Residues 1302-1323 (LETSESLSDSLYDSLSSCGSQG) are compositionally biased toward low complexity.

In terms of assembly, homodimer. Interacts with CDK5RAP2. Interacts with MAPRE1. Interacts with beta-tubulin. In terms of processing, CDK1/Cyclin B-dependent phosphorylation mediates its dissociation from centrosomes during mitosis.

It localises to the cytoplasm. The protein resides in the cytoskeleton. It is found in the microtubule organizing center. The protein localises to the centrosome. Functionally, regulates microtubule organization and stabilization. Promotes microtubule growth and bundling formation and stabilizes microtubules by increasing intense acetylation of microtubules. Both tubulin-binding and homodimer formation are required for NCKAP5L-mediated microtubule bundle formation. In Mus musculus (Mouse), this protein is Nck-associated protein 5-like (Nckap5l).